A 218-amino-acid polypeptide reads, in one-letter code: Protein GrpE (218 aa).

Basic and acidic residues predominate over residues 1–21 (MSDKQREAERQQSEDKAHSEA). A disordered region spans residues 1–66 (MSDKQREAER…LEEARARAEE (66 aa)). Low complexity predominate over residues 24-36 (AEAGQAPEAQAAE).

This sequence belongs to the GrpE family. Homodimer.

It is found in the cytoplasm. Functionally, participates actively in the response to hyperosmotic and heat shock by preventing the aggregation of stress-denatured proteins, in association with DnaK and GrpE. It is the nucleotide exchange factor for DnaK and may function as a thermosensor. Unfolded proteins bind initially to DnaJ; upon interaction with the DnaJ-bound protein, DnaK hydrolyzes its bound ATP, resulting in the formation of a stable complex. GrpE releases ADP from DnaK; ATP binding to DnaK triggers the release of the substrate protein, thus completing the reaction cycle. Several rounds of ATP-dependent interactions between DnaJ, DnaK and GrpE are required for fully efficient folding. The sequence is that of Protein GrpE from Alkalilimnicola ehrlichii (strain ATCC BAA-1101 / DSM 17681 / MLHE-1).